Reading from the N-terminus, the 122-residue chain is Piercer of microtubule wall 2 protein (122 aa).

Over residues 1–23 (MARETDCDLDKKTSLTSDAEMRP) the composition is skewed to basic and acidic residues. Disordered regions lie at residues 1–26 (MARETDCDLDKKTSLTSDAEMRPEPP) and 99–122 (QNNSLNVGPDRTRTIDSPNYQHTL). A compositionally biased stretch (polar residues) spans 113 to 122 (IDSPNYQHTL).

The protein belongs to the PIERCE2 family. As to quaternary structure, microtubule inner protein component of sperm flagellar doublet microtubules. Interacts with CFAP53, ODAD1 and ODAD3; the interactions link the outer dynein arms docking complex (ODA-DC) to the internal microtubule inner proteins (MIP) in cilium axoneme.

The protein resides in the cytoplasm. The protein localises to the cytoskeleton. It is found in the cilium axoneme. Its subcellular location is the flagellum axoneme. Functionally, microtubule inner protein involved in the attachment of outer dynein arms (ODAs) to dynein-decorated doublet microtubules (DMTs) in cilia axoneme, which is required for motile cilia beating. The chain is Piercer of microtubule wall 2 protein from Mus musculus (Mouse).